We begin with the raw amino-acid sequence, 72 residues long: Heat-stable enterotoxin ST-IA/ST-P (72 aa).

Positions 1–19 (MKKLMLAIFISVLSFPSFS) are cleaved as a signal peptide. Residues 20–54 (QSTESLDSSKEKITLETKKCDVVKNNSEKKSENMN) constitute a propeptide that is removed on maturation. Intrachain disulfides connect cysteine 59–cysteine 64, cysteine 60–cysteine 68, and cysteine 63–cysteine 71.

Belongs to the heat-stable enterotoxin family.

It localises to the secreted. In terms of biological role, toxin which activates the particulate form of guanylate cyclase and increases cyclic GMP levels within the host intestinal epithelial cells. The polypeptide is Heat-stable enterotoxin ST-IA/ST-P (sta1) (Escherichia coli).